Consider the following 1097-residue polypeptide: uncharacterized protein (1097 aa).

A coiled-coil region spans residues 31 to 1087 (LLNVARQEEE…TALNKLRTRH (1057 aa)).

Belongs to the TRAFAC class myosin-kinesin ATPase superfamily. Myosin family. Specifically expressed in muscles of the head including temporalis and tensor veli palatini.

Functionally, has most probably lost the function in masticatory muscles contraction suspected for its homologs in dog (AC F1PT61) and apes. This is an uncharacterized protein from Homo sapiens (Human).